The sequence spans 653 residues: Aspartate--tRNA ligase, mitochondrial (653 aa).

The transit peptide at 1–46 (MYLGFWLSRLCRGLSRPIGKTMRPIWGSLSRNLALSSQRIPEFSSF) directs the protein to the mitochondrion. At Thr218 the chain carries Phosphothreonine. Residue Ser241 is modified to Phosphoserine. The segment at 243–246 (QQFK) is aspartate. An L-aspartate-binding site is contributed by Arg265. Residues 265-267 (RDE) and Glu534 contribute to the ATP site. Arg541 contacts L-aspartate. Position 583–586 (583–586 (GLDR)) interacts with ATP.

It belongs to the class-II aminoacyl-tRNA synthetase family. Type 1 subfamily. In terms of assembly, homodimer.

It localises to the mitochondrion matrix. It is found in the mitochondrion membrane. It carries out the reaction tRNA(Asp) + L-aspartate + ATP = L-aspartyl-tRNA(Asp) + AMP + diphosphate. In terms of biological role, catalyzes the attachment of aspartate to tRNA(Asp) in a two-step reaction: aspartate is first activated by ATP to form Asp-AMP and then transferred to the acceptor end of tRNA(Asp). The protein is Aspartate--tRNA ligase, mitochondrial (Dars2) of Mus musculus (Mouse).